The following is a 241-amino-acid chain: Small ribosomal subunit protein uS2 (241 aa).

The protein belongs to the universal ribosomal protein uS2 family.

This is Small ribosomal subunit protein uS2 from Buchnera aphidicola subsp. Cinara cedri (strain Cc).